The primary structure comprises 130 residues: kinetoplast-associated protein 2-2 (130 aa).

The propeptide occupies 1–10 (MLRRTVSNFA). Positions 95-130 (ETKQAQRAKAQKAQKKPKSAKSKVKKAAKKAKKSKK) are disordered. A compositionally biased stretch (basic residues) spans 103-130 (KAQKAQKKPKSAKSKVKKAAKKAKKSKK).

The protein belongs to the KAP family. As to quaternary structure, associates with the kinetoplast DNA network.

Its subcellular location is the mitochondrion matrix. The protein resides in the kinetoplast. In terms of biological role, histone H1-like DNA-binding protein involved in the organization and segregation of kinetoplast DNA (kDNA). The mitochondrial DNA of kinetoplastid protozoa consists of about 5,000 minicircles and 20 to 30 maxicircles. These circular DNAs are held together by catenation into a highly organized compact disk structure referred to as a kinetoplast DNA (kDNA) network. Binds preferentially to a specific fragment of minicircle DNA and is able to compact kDNA networks through DNA charge neutralization and condensation. This Crithidia fasciculata protein is kinetoplast-associated protein 2-2 (KAP2-2).